The primary structure comprises 147 residues: Protein MioC (147 aa).

The 140-residue stretch at 4–143 (ITLISGSTLG…PAEEWLGSWV (140 aa)) folds into the Flavodoxin-like domain.

Belongs to the flavodoxin family. MioC subfamily. Homodimer. FMN is required as a cofactor.

Its function is as follows. Probable electron transporter required for biotin synthase activity. This Escherichia coli (strain K12) protein is Protein MioC (mioC).